The sequence spans 308 residues: Cyclin-D2-1 (308 aa).

A disordered region spans residues 286–308; the sequence is EGLSYDSSSPPPPKRRKRSPPGT. Residues 298-308 are compositionally biased toward basic residues; sequence PKRRKRSPPGT.

Belongs to the cyclin family. Cyclin D subfamily.

The sequence is that of Cyclin-D2-1 (CYCD2-1) from Oryza sativa subsp. japonica (Rice).